Consider the following 123-residue polypeptide: Putative membrane protein insertion efficiency factor (123 aa).

Residues 1–23 (MGSCGGKHTGKGAPKPYSRNFTD) form a disordered region.

The protein belongs to the UPF0161 family.

The protein resides in the cell inner membrane. In terms of biological role, could be involved in insertion of integral membrane proteins into the membrane. This Brucella abortus (strain 2308) protein is Putative membrane protein insertion efficiency factor.